The primary structure comprises 1370 residues: DNA-directed RNA polymerase subunit beta (1370 aa).

This sequence belongs to the RNA polymerase beta chain family. The RNAP catalytic core consists of 2 alpha, 1 beta, 1 beta' and 1 omega subunit. When a sigma factor is associated with the core the holoenzyme is formed, which can initiate transcription.

The catalysed reaction is RNA(n) + a ribonucleoside 5'-triphosphate = RNA(n+1) + diphosphate. Functionally, DNA-dependent RNA polymerase catalyzes the transcription of DNA into RNA using the four ribonucleoside triphosphates as substrates. This Bordetella parapertussis (strain 12822 / ATCC BAA-587 / NCTC 13253) protein is DNA-directed RNA polymerase subunit beta.